The following is a 489-amino-acid chain: MMIMFFLLCSIIFVVTIIIFRKQKRGKKRNTLPSPPGLPLIGNLHQLGRHPHRSLCSLSHRYGPLMLLHFGRVPVLVVSSAELARDVLKTHDRVFASRPRSKIFEKLLYDKHDVASAPYGEYWRQMKSVCVLHLFSNKMVRSFREVREEEISLMMEKIRKSISLPVNLSKILVSLTNDVICKVALGRKYGGETDFKELMERLNKLLGTFSVGSYVPWLAWIDWIRGLDCQLEKTANDVDKFFERVVQDHVDGNRDMTDFVDVLLAIQRDKTVGFEINRVSIKAIVMNVFVGGTDTSSTLMEWAMTELLRHPKCLKRLQEEVRTICKDKSSVSEEEIQNMSYLKAVIKEALRLHPPLPLMVPHESTQDVRLGDHHIPAGTQVLINAWAIGREAATWGPDVEEFRPERHLDSSVDYRGQAFELIPFGSGRRICPAISFAVVLNEVVLANLVHRFDWRLSVESTEDQTEVAESTGIAIHRMFPLYAIASNTT.

The chain crosses the membrane as a helical span at residues 1-21 (MMIMFFLLCSIIFVVTIIIFR). Cysteine 431 lines the heme pocket.

This sequence belongs to the cytochrome P450 family. The cofactor is heme.

It localises to the membrane. The protein is Cytochrome P450 71A26 (CYP71A26) of Arabidopsis thaliana (Mouse-ear cress).